A 1161-amino-acid polypeptide reads, in one-letter code: PAN2-PAN3 deadenylation complex catalytic subunit pan2 (1161 aa).

WD repeat units follow at residues 20 to 59, 102 to 145, and 276 to 315; these read GLPT…RYTS, AHEE…DKLQ, and ANVS…HFNE. The linker stretch occupies residues 316-452; it reads MSKEVEFADV…GAKLNGEAED (137 aa). Residues 453-822 enclose the USP domain; that stretch reads DPLLKYSNVE…IPCVLAYQAR (370 aa). The Exonuclease domain occupies 871–1049; sequence VALDTEFVDL…VEDARMALRL (179 aa). Positions 874, 876, 983, and 1042 each coordinate a divalent metal cation. The segment at 1094-1161 is disordered; sequence GTAVTMQNNS…GDFFGGSPLK (68 aa). Over residues 1097 to 1110 the composition is skewed to polar residues; that stretch reads VTMQNNSGRNTPST. Residues 1116–1129 are compositionally biased toward low complexity; that stretch reads AAAAAATTSAPATP. Residues 1145-1155 are compositionally biased toward gly residues; sequence TFGGPGTGDFF.

It belongs to the peptidase C19 family. PAN2 subfamily. As to quaternary structure, forms a heterotrimer with an asymmetric homodimer of the regulatory subunit pan3 to form the poly(A)-nuclease (PAN) deadenylation complex. A divalent metal cation is required as a cofactor.

The protein localises to the cytoplasm. It carries out the reaction Exonucleolytic cleavage of poly(A) to 5'-AMP.. With respect to regulation, positively regulated by the regulatory subunit pan3. Its function is as follows. Catalytic subunit of the poly(A)-nuclease (PAN) deadenylation complex, one of two cytoplasmic mRNA deadenylases involved in mRNA turnover. PAN specifically shortens poly(A) tails of RNA and the activity is stimulated by poly(A)-binding protein pab1. PAN deadenylation is followed by rapid degradation of the shortened mRNA tails by the CCR4-NOT complex. Deadenylated mRNAs are then degraded by two alternative mechanisms, namely exosome-mediated 3'-5' exonucleolytic degradation, or deadenylation-dependent mRNA decaping and subsequent 5'-3' exonucleolytic degradation by xrn1. May also be involved in post-transcriptional maturation of mRNA poly(A) tails. The protein is PAN2-PAN3 deadenylation complex catalytic subunit pan2 of Aspergillus clavatus (strain ATCC 1007 / CBS 513.65 / DSM 816 / NCTC 3887 / NRRL 1 / QM 1276 / 107).